A 555-amino-acid chain; its full sequence is Beta-fructofuranosidase, cell wall isozyme (555 aa).

An N-terminal signal peptide occupies residues 1-22 (MAISSIFLLSLFSLIYVIPIEA). Substrate-binding positions include 58 to 61 (WIND), Gln-77, Trp-85, and 120 to 121 (WS). Asp-61 is an active-site residue. The active site involves Asp-140. N-linked (GlcNAc...) asparagine glycosylation is found at Asn-154 and Asn-181. Residues 186–187 (RD), Glu-241, and Asp-277 contribute to the substrate site. Residue Asn-337 is glycosylated (N-linked (GlcNAc...) asparagine). A disulfide bond links Cys-435 and Cys-481.

It belongs to the glycosyl hydrolase 32 family.

The catalysed reaction is Hydrolysis of terminal non-reducing beta-D-fructofuranoside residues in beta-D-fructofuranosides.. The chain is Beta-fructofuranosidase, cell wall isozyme (BFRUCT1) from Pisum sativum (Garden pea).